A 184-amino-acid polypeptide reads, in one-letter code: ATP-dependent protease subunit HslV (184 aa).

The active site involves Thr12. Na(+) contacts are provided by Ala166, Cys169, and Thr172.

It belongs to the peptidase T1B family. HslV subfamily. In terms of assembly, a double ring-shaped homohexamer of HslV is capped on each side by a ring-shaped HslU homohexamer. The assembly of the HslU/HslV complex is dependent on binding of ATP.

The protein resides in the cytoplasm. It carries out the reaction ATP-dependent cleavage of peptide bonds with broad specificity.. Allosterically activated by HslU binding. Its function is as follows. Protease subunit of a proteasome-like degradation complex believed to be a general protein degrading machinery. The chain is ATP-dependent protease subunit HslV from Brucella ovis (strain ATCC 25840 / 63/290 / NCTC 10512).